The following is an 812-amino-acid chain: Valine--tRNA ligase (812 aa).

The 'HIGH' region motif lies at 47 to 57 (PTISGQLHIGH). The 'KMSKS' region motif lies at 536-540 (KMSKS). Lys-539 is a binding site for ATP.

This sequence belongs to the class-I aminoacyl-tRNA synthetase family. ValS type 2 subfamily. In terms of assembly, monomer.

It localises to the cytoplasm. The enzyme catalyses tRNA(Val) + L-valine + ATP = L-valyl-tRNA(Val) + AMP + diphosphate. In terms of biological role, catalyzes the attachment of valine to tRNA(Val). As ValRS can inadvertently accommodate and process structurally similar amino acids such as threonine, to avoid such errors, it has a 'posttransfer' editing activity that hydrolyzes mischarged Thr-tRNA(Val) in a tRNA-dependent manner. The chain is Valine--tRNA ligase from Ehrlichia ruminantium (strain Gardel).